Consider the following 197-residue polypeptide: Glycerol-3-phosphate acyltransferase (197 aa).

A run of 5 helical transmembrane segments spans residues 7–27 (TLLP…LILT), 55–75 (GLAA…VLIV), 78–98 (VWPG…CFPV), 116–136 (LALA…VLFL), and 157–177 (VLGY…VLYL).

This sequence belongs to the PlsY family. Probably interacts with PlsX.

The protein resides in the cell inner membrane. The enzyme catalyses an acyl phosphate + sn-glycerol 3-phosphate = a 1-acyl-sn-glycero-3-phosphate + phosphate. The protein operates within lipid metabolism; phospholipid metabolism. Its function is as follows. Catalyzes the transfer of an acyl group from acyl-phosphate (acyl-PO(4)) to glycerol-3-phosphate (G3P) to form lysophosphatidic acid (LPA). This enzyme utilizes acyl-phosphate as fatty acyl donor, but not acyl-CoA or acyl-ACP. The chain is Glycerol-3-phosphate acyltransferase from Novosphingobium aromaticivorans (strain ATCC 700278 / DSM 12444 / CCUG 56034 / CIP 105152 / NBRC 16084 / F199).